A 199-amino-acid polypeptide reads, in one-letter code: Recombination protein RecR (199 aa).

The C4-type zinc-finger motif lies at 57–72; the sequence is CQSCRTYTEETLCPIC. The Toprim domain maps to 81–176; it reads STICVVETPA…MISRIAHGVP (96 aa).

This sequence belongs to the RecR family.

Functionally, may play a role in DNA repair. It seems to be involved in an RecBC-independent recombinational process of DNA repair. It may act with RecF and RecO. The polypeptide is Recombination protein RecR (Shewanella baltica (strain OS195)).